The chain runs to 144 residues: C-type isolectin Sp-CL4 (144 aa).

The C-type lectin domain occupies 27 to 144 (DENRKVKYFE…CSEKLPFMCA (118 aa)). Intrachain disulfides connect cysteine 48-cysteine 143 and cysteine 119-cysteine 135.

It belongs to the true venom lectin family. In terms of processing, glycosylated with a carbohydrate of 383 Da. In terms of tissue distribution, expressed by the venom gland.

It localises to the secreted. Its function is as follows. The role of this hemagglutinin in the venom is unknown, because it is masked by the high venom hemolytic activity. Lectin with specificity to galactose. Induces hemagglutination. This chain is C-type isolectin Sp-CL4, found in Scorpaena plumieri (Spotted scorpionfish).